Reading from the N-terminus, the 450-residue chain is Putative mediator of RNA polymerase II transcription subunit 27 (450 aa).

Residues 15-118 (QQQQAQQHQQ…QKLKKSMDLV (104 aa)) adopt a coiled-coil conformation.

Belongs to the Mediator complex subunit 27 family. Component of the Mediator complex.

The protein resides in the nucleus. Component of the Mediator complex, a coactivator involved in the regulated transcription of nearly all RNA polymerase II-dependent genes. Mediator functions as a bridge to convey information from gene-specific regulatory proteins to the basal RNA polymerase II transcription machinery. Mediator is recruited to promoters by direct interactions with regulatory proteins and serves as a scaffold for the assembly of a functional preinitiation complex with RNA polymerase II and the general transcription factors. This is Putative mediator of RNA polymerase II transcription subunit 27 (med27) from Dictyostelium discoideum (Social amoeba).